The primary structure comprises 80 residues: Omega-conotoxin-like 2/7 (80 aa).

A signal peptide spans 1 to 22 (MKLTCMMIVAVMFLTASIFITA). A propeptide spanning residues 23–51 (DNSRNGIENLPRMRRHEMKKPKASKLNKR) is cleaved from the precursor. 3 disulfide bridges follow: Cys53-Cys71, Cys60-Cys75, and Cys70-Cys79.

The protein belongs to the conotoxin O1 superfamily. In terms of tissue distribution, expressed by the venom duct.

Its subcellular location is the secreted. Its function is as follows. Omega-conotoxins act at presynaptic membranes, they bind and block voltage-gated calcium channels (Cav). In Conus imperialis (Imperial cone), this protein is Omega-conotoxin-like 2/7.